Reading from the N-terminus, the 690-residue chain is DNA topoisomerase 1 (690 aa).

The 119-residue stretch at 3 to 121 (DYLVIVESPA…EITKQAIKDA (119 aa)) folds into the Toprim domain. Glutamate 9 and aspartate 82 together coordinate Mg(2+). Residues 129-558 (NMDLVDAQQA…DFYKGFEERL (430 aa)) form the Topo IA-type catalytic domain. Positions 163-168 (SAGRVQ) are interaction with DNA. The O-(5'-phospho-DNA)-tyrosine intermediate role is filled by tyrosine 298. The segment at 329–354 (NGTKAVKKDKKSQDAHEAIRPTSVER) is disordered. Basic and acidic residues predominate over residues 339-354 (KSQDAHEAIRPTSVER). 3 C4-type zinc fingers span residues 579–605 (CEKC…FPDC), 619–647 (CPKC…YPEC), and 660–683 (CPKC…CSSC).

It belongs to the type IA topoisomerase family. As to quaternary structure, monomer. It depends on Mg(2+) as a cofactor.

The catalysed reaction is ATP-independent breakage of single-stranded DNA, followed by passage and rejoining.. In terms of biological role, releases the supercoiling and torsional tension of DNA, which is introduced during the DNA replication and transcription, by transiently cleaving and rejoining one strand of the DNA duplex. Introduces a single-strand break via transesterification at a target site in duplex DNA. The scissile phosphodiester is attacked by the catalytic tyrosine of the enzyme, resulting in the formation of a DNA-(5'-phosphotyrosyl)-enzyme intermediate and the expulsion of a 3'-OH DNA strand. The free DNA strand then undergoes passage around the unbroken strand, thus removing DNA supercoils. Finally, in the religation step, the DNA 3'-OH attacks the covalent intermediate to expel the active-site tyrosine and restore the DNA phosphodiester backbone. In Halalkalibacterium halodurans (strain ATCC BAA-125 / DSM 18197 / FERM 7344 / JCM 9153 / C-125) (Bacillus halodurans), this protein is DNA topoisomerase 1.